The following is a 262-amino-acid chain: Ribose-5-phosphate isomerase A (262 aa).

Residues 33 to 36 (TGST), 89 to 92 (DGTD), and 102 to 105 (KGGG) each bind substrate. Residue Glu111 is the Proton acceptor of the active site. Lys129 provides a ligand contact to substrate.

Belongs to the ribose 5-phosphate isomerase family. As to quaternary structure, homodimer.

It carries out the reaction aldehydo-D-ribose 5-phosphate = D-ribulose 5-phosphate. It functions in the pathway carbohydrate degradation; pentose phosphate pathway; D-ribose 5-phosphate from D-ribulose 5-phosphate (non-oxidative stage): step 1/1. Catalyzes the reversible conversion of ribose-5-phosphate to ribulose 5-phosphate. This Jannaschia sp. (strain CCS1) protein is Ribose-5-phosphate isomerase A.